The chain runs to 252 residues: Geranylgeranylglyceryl phosphate synthase (252 aa).

Mg(2+) is bound by residues Asp-27 and Thr-57. Sn-glycerol 1-phosphate-binding positions include 175 to 181 (YLEAGSG), 206 to 207 (GG), and 228 to 229 (GN).

The protein belongs to the GGGP/HepGP synthase family. Group II subfamily. Requires Mg(2+) as cofactor.

Its subcellular location is the cytoplasm. It catalyses the reaction sn-glycerol 1-phosphate + (2E,6E,10E)-geranylgeranyl diphosphate = sn-3-O-(geranylgeranyl)glycerol 1-phosphate + diphosphate. The protein operates within membrane lipid metabolism; glycerophospholipid metabolism. In terms of biological role, prenyltransferase that catalyzes the transfer of the geranylgeranyl moiety of geranylgeranyl diphosphate (GGPP) to the C3 hydroxyl of sn-glycerol-1-phosphate (G1P). This reaction is the first ether-bond-formation step in the biosynthesis of archaeal membrane lipids. This chain is Geranylgeranylglyceryl phosphate synthase, found in Metallosphaera sedula (strain ATCC 51363 / DSM 5348 / JCM 9185 / NBRC 15509 / TH2).